We begin with the raw amino-acid sequence, 127 residues long: Apolipoprotein C-IV (127 aa).

The first 27 residues, 1–27 (MSLLRNRLQDLPALCLCVLVLACIGAC), serve as a signal peptide directing secretion.

The protein belongs to the apolipoprotein C4 family.

The protein resides in the secreted. Functionally, may participate in lipoprotein metabolism. This Papio hamadryas (Hamadryas baboon) protein is Apolipoprotein C-IV (APOC4).